Here is a 474-residue protein sequence, read N- to C-terminus: Ribulose bisphosphate carboxylase large chain (474 aa).

2 residues coordinate substrate: asparagine 122 and threonine 172. Catalysis depends on lysine 174, which acts as the Proton acceptor. Lysine 176 is a substrate binding site. Positions 200, 202, and 203 each coordinate Mg(2+). The residue at position 200 (lysine 200) is an N6-carboxylysine. The active-site Proton acceptor is histidine 293. Residues arginine 294, histidine 326, and serine 378 each coordinate substrate.

The protein belongs to the RuBisCO large chain family. Type I subfamily. As to quaternary structure, heterohexadecamer of 8 large chains and 8 small chains; disulfide-linked. The disulfide link is formed within the large subunit homodimers. It depends on Mg(2+) as a cofactor. Post-translationally, the disulfide bond which can form in the large chain dimeric partners within the hexadecamer appears to be associated with oxidative stress and protein turnover.

It localises to the carboxysome. The catalysed reaction is 2 (2R)-3-phosphoglycerate + 2 H(+) = D-ribulose 1,5-bisphosphate + CO2 + H2O. The enzyme catalyses D-ribulose 1,5-bisphosphate + O2 = 2-phosphoglycolate + (2R)-3-phosphoglycerate + 2 H(+). Its function is as follows. RuBisCO catalyzes two reactions: the carboxylation of D-ribulose 1,5-bisphosphate, the primary event in carbon dioxide fixation, as well as the oxidative fragmentation of the pentose substrate in the photorespiration process. Both reactions occur simultaneously and in competition at the same active site. This Synechococcus sp. (strain JA-3-3Ab) (Cyanobacteria bacterium Yellowstone A-Prime) protein is Ribulose bisphosphate carboxylase large chain.